Here is an 814-residue protein sequence, read N- to C-terminus: Rap guanine nucleotide exchange factor 5 (814 aa).

Positions 43 to 118 (LQAADLVKDR…DNYVFYQFSS (76 aa)) constitute a DEP domain. One can recognise an N-terminal Ras-GEF domain in the interval 301–434 (ARYVVVSGTP…ELKEFQKILG (134 aa)). The Ras-GEF domain maps to 578–813 (NTWDLALELM…FELSHRLEPR (236 aa)).

It localises to the nucleus. Its function is as follows. Guanine nucleotide exchange factor (GEF) for RAP1A, RAP2A and MRAS/M-Ras-GTP. Its association with MRAS inhibits Rap1 activation. The polypeptide is Rap guanine nucleotide exchange factor 5 (Rapgef5) (Mus musculus (Mouse)).